A 439-amino-acid polypeptide reads, in one-letter code: Xylose isomerase (439 aa).

Active-site residues include histidine 101 and aspartate 104. Mg(2+)-binding residues include glutamate 232, glutamate 268, histidine 271, aspartate 296, aspartate 307, aspartate 309, and aspartate 339.

This sequence belongs to the xylose isomerase family. Homotetramer. It depends on Mg(2+) as a cofactor.

The protein resides in the cytoplasm. The enzyme catalyses alpha-D-xylose = alpha-D-xylulofuranose. This is Xylose isomerase from Haemophilus influenzae (strain PittGG).